A 570-amino-acid chain; its full sequence is Rho GTPase-activating protein gacEE (570 aa).

The region spanning 127 to 233 (NSDISGVLLK…WVTTINNCID (107 aa)) is the PH domain. The C2 domain maps to 224–343 (WVTTINNCID…PNGSEISLWL (120 aa)). Residues aspartate 260, aspartate 266, aspartate 312, aspartate 314, and aspartate 320 each coordinate Ca(2+). The Rho-GAP domain occupies 381-567 (NSLEAIVKNR…FVFENSQQIL (187 aa)).

The cofactor is Ca(2+).

It localises to the cytoplasm. In terms of biological role, rho GTPase-activating protein involved in the signal transduction pathway. This chain is Rho GTPase-activating protein gacEE (gacEE), found in Dictyostelium discoideum (Social amoeba).